The primary structure comprises 598 residues: UvrABC system protein C (598 aa).

Residues 13-92 enclose the GIY-YIG domain; sequence SSPGVYLMKD…IKKYQPRYNV (80 aa). The 36-residue stretch at 206 to 241 folds into the UVR domain; that stretch reads DTTIANLEEAIKKASQEHKFEHAAALYRTLTLIRQT.

This sequence belongs to the UvrC family. In terms of assembly, interacts with UvrB in an incision complex.

Its subcellular location is the cytoplasm. The UvrABC repair system catalyzes the recognition and processing of DNA lesions. UvrC both incises the 5' and 3' sides of the lesion. The N-terminal half is responsible for the 3' incision and the C-terminal half is responsible for the 5' incision. The polypeptide is UvrABC system protein C (Chlamydia muridarum (strain MoPn / Nigg)).